Here is a 249-residue protein sequence, read N- to C-terminus: 5'-nucleotidase SurE (249 aa).

Asp-8, Asp-9, Ser-39, and Asn-91 together coordinate a divalent metal cation.

Belongs to the SurE nucleotidase family. A divalent metal cation is required as a cofactor.

It localises to the cytoplasm. It carries out the reaction a ribonucleoside 5'-phosphate + H2O = a ribonucleoside + phosphate. In terms of biological role, nucleotidase that shows phosphatase activity on nucleoside 5'-monophosphates. The protein is 5'-nucleotidase SurE of Pseudomonas putida (strain ATCC 700007 / DSM 6899 / JCM 31910 / BCRC 17059 / LMG 24140 / F1).